A 292-amino-acid chain; its full sequence is Nucleotide-binding protein AZOSEA20610 (292 aa).

8-15 is an ATP binding site; sequence GLSGSGKS. Position 57 to 60 (57 to 60) interacts with GTP; the sequence is DVRS.

The protein belongs to the RapZ-like family.

In terms of biological role, displays ATPase and GTPase activities. The sequence is that of Nucleotide-binding protein AZOSEA20610 from Aromatoleum aromaticum (strain DSM 19018 / LMG 30748 / EbN1) (Azoarcus sp. (strain EbN1)).